The sequence spans 473 residues: Dolichyl-diphosphooligosaccharide--protein glycosyltransferase subunit 1B (473 aa).

The first 27 residues, M1 to S27, serve as a signal peptide directing secretion. Topologically, residues P28–P439 are lumenal. Residues N307 and N361 are each glycosylated (N-linked (GlcNAc...) asparagine). Residues I440–C460 form a helical membrane-spanning segment. Over I461–S473 the chain is Cytoplasmic.

It belongs to the OST1 family. Component of the oligosaccharyltransferase (OST) complex.

It localises to the endoplasmic reticulum membrane. The protein operates within protein modification; protein glycosylation. In terms of biological role, subunit of the oligosaccharyl transferase (OST) complex that catalyzes the initial transfer of a defined glycan (Glc(3)Man(9)GlcNAc(2) in eukaryotes) from the lipid carrier dolichol-pyrophosphate to an asparagine residue within an Asn-X-Ser/Thr consensus motif in nascent polypeptide chains, the first step in protein N-glycosylation. N-glycosylation occurs cotranslationally and the complex associates with the Sec61 complex at the channel-forming translocon complex that mediates protein translocation across the endoplasmic reticulum (ER). All subunits are required for a maximal enzyme activity. This Oryza sativa subsp. japonica (Rice) protein is Dolichyl-diphosphooligosaccharide--protein glycosyltransferase subunit 1B (OST1B).